The following is a 129-amino-acid chain: Cytochrome c oxidase subunit 5B, mitochondrial (129 aa).

A mitochondrion-targeting transit peptide spans 1–31 (MASRLLRGAGALAAQALRARGPSGAAAVRSM). An N6-acetyllysine mark is found at lysine 68 and lysine 86. Zn(2+) contacts are provided by cysteine 91, cysteine 93, cysteine 113, and cysteine 116. Lysine 121 carries the N6-acetyllysine modification.

It belongs to the cytochrome c oxidase subunit 5B family. In terms of assembly, component of the cytochrome c oxidase (complex IV, CIV), a multisubunit enzyme composed of 14 subunits. The complex is composed of a catalytic core of 3 subunits MT-CO1, MT-CO2 and MT-CO3, encoded in the mitochondrial DNA, and 11 supernumerary subunits COX4I, COX5A, COX5B, COX6A, COX6B, COX6C, COX7A, COX7B, COX7C, COX8 and NDUFA4, which are encoded in the nuclear genome. The complex exists as a monomer or a dimer and forms supercomplexes (SCs) in the inner mitochondrial membrane with NADH-ubiquinone oxidoreductase (complex I, CI) and ubiquinol-cytochrome c oxidoreductase (cytochrome b-c1 complex, complex III, CIII), resulting in different assemblies (supercomplex SCI(1)III(2)IV(1) and megacomplex MCI(2)III(2)IV(2)).

It is found in the mitochondrion inner membrane. It participates in energy metabolism; oxidative phosphorylation. Its function is as follows. Component of the cytochrome c oxidase, the last enzyme in the mitochondrial electron transport chain which drives oxidative phosphorylation. The respiratory chain contains 3 multisubunit complexes succinate dehydrogenase (complex II, CII), ubiquinol-cytochrome c oxidoreductase (cytochrome b-c1 complex, complex III, CIII) and cytochrome c oxidase (complex IV, CIV), that cooperate to transfer electrons derived from NADH and succinate to molecular oxygen, creating an electrochemical gradient over the inner membrane that drives transmembrane transport and the ATP synthase. Cytochrome c oxidase is the component of the respiratory chain that catalyzes the reduction of oxygen to water. Electrons originating from reduced cytochrome c in the intermembrane space (IMS) are transferred via the dinuclear copper A center (CU(A)) of subunit 2 and heme A of subunit 1 to the active site in subunit 1, a binuclear center (BNC) formed by heme A3 and copper B (CU(B)). The BNC reduces molecular oxygen to 2 water molecules using 4 electrons from cytochrome c in the IMS and 4 protons from the mitochondrial matrix. This is Cytochrome c oxidase subunit 5B, mitochondrial (COX5B) from Pongo abelii (Sumatran orangutan).